Reading from the N-terminus, the 154-residue chain is Myoglobin (154 aa).

Residues 2–148 (GLSDGEWQLV…FRNDIAAKYK (147 aa)) enclose the Globin domain. Serine 4 is subject to Phosphoserine. Histidine 65 contributes to the nitrite binding site. Histidine 65 serves as a coordination point for O2. Position 68 is a phosphothreonine (threonine 68). Histidine 94 serves as a coordination point for heme b.

It belongs to the globin family. In terms of assembly, monomeric.

The protein resides in the cytoplasm. It localises to the sarcoplasm. It carries out the reaction Fe(III)-heme b-[protein] + nitric oxide + H2O = Fe(II)-heme b-[protein] + nitrite + 2 H(+). The catalysed reaction is H2O2 + AH2 = A + 2 H2O. Its function is as follows. Monomeric heme protein which primary function is to store oxygen and facilitate its diffusion within muscle tissues. Reversibly binds oxygen through a pentacoordinated heme iron and enables its timely and efficient release as needed during periods of heightened demand. Depending on the oxidative conditions of tissues and cells, and in addition to its ability to bind oxygen, it also has a nitrite reductase activity whereby it regulates the production of bioactive nitric oxide. Under stress conditions, like hypoxia and anoxia, it also protects cells against reactive oxygen species thanks to its pseudoperoxidase activity. The polypeptide is Myoglobin (MB) (Sciurus vulgaris (Eurasian red squirrel)).